A 187-amino-acid polypeptide reads, in one-letter code: Adenylate kinase (187 aa).

10–15 serves as a coordination point for ATP; the sequence is GSGKGT. Residues 30–59 form an NMP region; it reads STGDMLRAEIAAGTELGKQAKTVMDAGNLV. Residues threonine 31, arginine 36, 57–59, 85–88, and glutamine 92 contribute to the AMP site; these read NLV and GYPR. The tract at residues 126 to 136 is LID; sequence GRAKEQGRADD. Position 127 (arginine 127) interacts with ATP. AMP-binding residues include arginine 133 and arginine 144. An ATP-binding site is contributed by glycine 172.

This sequence belongs to the adenylate kinase family. Monomer.

The protein localises to the cytoplasm. It catalyses the reaction AMP + ATP = 2 ADP. Its pathway is purine metabolism; AMP biosynthesis via salvage pathway; AMP from ADP: step 1/1. Catalyzes the reversible transfer of the terminal phosphate group between ATP and AMP. Plays an important role in cellular energy homeostasis and in adenine nucleotide metabolism. This is Adenylate kinase from Stenotrophomonas maltophilia (strain K279a).